Consider the following 150-residue polypeptide: Large ribosomal subunit protein uL15 (150 aa).

The segment at 1–60 is disordered; it reads MKLSDLRPNPGANKRRKRVGRGPGSGHGKTATRGHKGQKSRSGGLKDPRRFEGGRSTTLM. The span at 30–39 shows a compositional bias: basic residues; it reads TATRGHKGQK. The segment covering 44-53 has biased composition (basic and acidic residues); sequence GLKDPRRFEG.

The protein belongs to the universal ribosomal protein uL15 family. Part of the 50S ribosomal subunit.

In terms of biological role, binds to the 23S rRNA. This is Large ribosomal subunit protein uL15 from Thermus thermophilus (strain ATCC BAA-163 / DSM 7039 / HB27).